The following is a 339-amino-acid chain: Deubiquitinase and deneddylase Dub2 (339 aa).

The helical transmembrane segment at 36–56 threads the bilayer; sequence IIIALFLIVISCGLILCAYTF. Active-site residues include His-203, Asp-220, and Cys-282.

This sequence belongs to the peptidase C48 family.

It is found in the secreted. The protein resides in the host cell. The protein localises to the membrane. Its function is as follows. Effector proteins function to alter host cell physiology and promote bacterial survival in host tissues. This protease possesses deubiquitinating and deneddylating activities. This chain is Deubiquitinase and deneddylase Dub2 (cdu2), found in Chlamydia trachomatis serovar D (strain ATCC VR-885 / DSM 19411 / UW-3/Cx).